A 213-amino-acid polypeptide reads, in one-letter code: Ras-related protein Rab-2 (213 aa).

Residues T15, G16, G18, K19, S20, C21, Q32, P33, H35, T38, G64, N119, D122, and A150 each contribute to the GTP site. Residue S20 participates in Mg(2+) binding. Position 38 (T38) interacts with Mg(2+). Residues Q190–C213 form a disordered region. S-geranylgeranyl cysteine attachment occurs at residues C212 and C213.

Belongs to the small GTPase superfamily. Rab family. Interacts (GTP-bound form) with Vps16A and Vps39; the interaction with Vps39 is probably direct.

It is found in the vesicle. It localises to the cytoplasmic vesicle. The protein resides in the cell projection. Its subcellular location is the axon. The protein localises to the presynapse. It is found in the presynaptic active zone. It localises to the golgi apparatus. The protein resides in the trans-Golgi network. Its subcellular location is the perikaryon. The protein localises to the autophagosome membrane. It is found in the autolysosome membrane. It carries out the reaction GTP + H2O = GDP + phosphate + H(+). May be involved in bidirectional endoplasmic reticulum (ER) to Golgi trafficking. Together with Rab7 involved in promoting fusion of autophagosomes and endosomes with lysosomes, probably through recruitment of the HOPS tethering complex. Involved in biosynthetic transport to lysosomes. In larval motor neurons, mediates the biogenesis of presynaptic cargo vesicles and their long-range axonal trafficking to synaptic termini. Not involved in axonal trafficking of mitochondria. During vesicle biogenesis, active zone proteins (including brp/Bruchpilot) and synaptic vesicle proteins (including VGlut) are sorted from the trans-Golgi in a Rab2-dependent manner via, at least, two independent routes. Acts upstream of Arl8 during presynaptic precursor vesicle biogenesis. Associated with lysosomal marker positive presynaptic cargo vesicles during anterograde and retrograde axonal trafficking, probably while in its GTP-bound active state. Involved in the delivery of presynaptic cargos, but not presynapse assembly or active zone function at synaptic termini. Required for autophagocytosis-dependent remodeling of myofibrils and transverse-tubules (T-tubules) during metamorphosis. The polypeptide is Ras-related protein Rab-2 (Drosophila melanogaster (Fruit fly)).